The sequence spans 65 residues: Large ribosomal subunit protein bL28 (65 aa).

This sequence belongs to the bacterial ribosomal protein bL28 family.

This is Large ribosomal subunit protein bL28 from Bifidobacterium animalis subsp. lactis (strain AD011).